The following is a 120-amino-acid chain: Flagellar protein FliT (120 aa).

Positions 1 to 50 are required for homodimerization; it reads MERHQHLLSEYQQILTLSEQMLMLATVENWDALVDLEMAYLKAVENTANI. Residues 60 to 98 are fliD binding; sequence LQELLRQKLRSILENEIEIKRLLQRRLDKLSELVGQSTR.

This sequence belongs to the FliT family. Homodimer. Interacts with FliD and FlhC.

The protein resides in the cytoplasm. The protein localises to the cytosol. In terms of biological role, dual-function protein that regulates the transcription of class 2 flagellar operons and that also acts as an export chaperone for the filament-capping protein FliD. As a transcriptional regulator, acts as an anti-FlhDC factor; it directly binds FlhC, thus inhibiting the binding of the FlhC/FlhD complex to class 2 promoters, resulting in decreased expression of class 2 flagellar operons. As a chaperone, effects FliD transition to the membrane by preventing its premature polymerization, and by directing it to the export apparatus. In Yersinia pseudotuberculosis serotype IB (strain PB1/+), this protein is Flagellar protein FliT.